Consider the following 115-residue polypeptide: Cell division protein FtsL (115 aa).

Topologically, residues 1–25 (MNTATRVIVAQNVRTRNRTFQITKQ) are cytoplasmic. Residues 26–46 (GVVIVALVIALLCSAFGVVYF) form a helical membrane-spanning segment. Over 47-115 (KDLNRRLFIQ…ILVNADAMIE (69 aa)) the chain is Periplasmic.

The protein belongs to the FtsL family. Part of a complex composed of FtsB, FtsL and FtsQ.

It is found in the cell inner membrane. Its function is as follows. Essential cell division protein. May link together the upstream cell division proteins, which are predominantly cytoplasmic, with the downstream cell division proteins, which are predominantly periplasmic. The sequence is that of Cell division protein FtsL from Coxiella burnetii (strain RSA 493 / Nine Mile phase I).